A 420-amino-acid polypeptide reads, in one-letter code: Protein phosphatase methylesterase 1 (420 aa).

Composition is skewed to low complexity over residues 18 to 28 and 42 to 51; these read PEAPLLSESSS and SSVSSTGTVI. The segment at 18–51 is disordered; sequence PEAPLLSESSSMNHPAESSHDEDSSSVSSTGTVI. Active-site residues include serine 197, aspartate 223, and histidine 354.

The protein belongs to the AB hydrolase superfamily.

It carries out the reaction [phosphatase 2A protein]-C-terminal L-leucine methyl ester + H2O = [phosphatase 2A protein]-C-terminal L-leucine + methanol + H(+). In terms of biological role, demethylates proteins that have been reversibly carboxymethylated. Demethylates the phosphatase PP2A catalytic subunit. This is Protein phosphatase methylesterase 1 (ppe1) from Aspergillus fumigatus (strain ATCC MYA-4609 / CBS 101355 / FGSC A1100 / Af293) (Neosartorya fumigata).